A 312-amino-acid chain; its full sequence is Olfactory receptor 2M3 (312 aa).

Residues M1–T25 lie on the Extracellular side of the membrane. N-linked (GlcNAc...) asparagine glycosylation is present at N5. A helical transmembrane segment spans residues F26–I49. Residues Y50 to T57 are Cytoplasmic-facing. Residues P58 to P79 traverse the membrane as a helical segment. Residues K80–Q100 are Extracellular-facing. Residues C97 and C189 are joined by a disulfide bond. Residues I101–Y120 traverse the membrane as a helical segment. Over D121 to K139 the chain is Cytoplasmic. Residues I140–I158 traverse the membrane as a helical segment. Topologically, residues D159–F195 are extracellular. Residues E196–A219 form a helical membrane-spanning segment. Residues R220–K236 are Cytoplasmic-facing. Residues A237–Y259 form a helical membrane-spanning segment. Residues I260–K272 lie on the Extracellular side of the membrane. Residues M273–L292 form a helical membrane-spanning segment. Residues R293–E312 lie on the Cytoplasmic side of the membrane.

This sequence belongs to the G-protein coupled receptor 1 family.

It is found in the cell membrane. Functionally, odorant receptor. This chain is Olfactory receptor 2M3 (OR2M3), found in Homo sapiens (Human).